Reading from the N-terminus, the 227-residue chain is Pyridoxine/pyridoxamine 5'-phosphate oxidase (227 aa).

Substrate contacts are provided by residues 23-26 and Lys81; that span reads RREY. Residues 76 to 81, 91 to 92, Arg97, Lys98, and Gln120 each bind FMN; these read RIVLLK and YT. Substrate contacts are provided by Tyr138, Arg142, and Ser146. FMN is bound by residues 155–156 and Trp200; that span reads QS. 206–208 is a binding site for substrate; that stretch reads RLH. Position 210 (Arg210) interacts with FMN.

It belongs to the pyridoxamine 5'-phosphate oxidase family. As to quaternary structure, homodimer. FMN is required as a cofactor.

It catalyses the reaction pyridoxamine 5'-phosphate + O2 + H2O = pyridoxal 5'-phosphate + H2O2 + NH4(+). The catalysed reaction is pyridoxine 5'-phosphate + O2 = pyridoxal 5'-phosphate + H2O2. The protein operates within cofactor metabolism; pyridoxal 5'-phosphate salvage; pyridoxal 5'-phosphate from pyridoxamine 5'-phosphate: step 1/1. It functions in the pathway cofactor metabolism; pyridoxal 5'-phosphate salvage; pyridoxal 5'-phosphate from pyridoxine 5'-phosphate: step 1/1. Catalyzes the oxidation of either pyridoxine 5'-phosphate (PNP) or pyridoxamine 5'-phosphate (PMP) into pyridoxal 5'-phosphate (PLP). This Pectobacterium atrosepticum (strain SCRI 1043 / ATCC BAA-672) (Erwinia carotovora subsp. atroseptica) protein is Pyridoxine/pyridoxamine 5'-phosphate oxidase.